Consider the following 396-residue polypeptide: Alanine racemase (396 aa).

Lysine 46 serves as the catalytic Proton acceptor; specific for D-alanine. Lysine 46 bears the N6-(pyridoxal phosphate)lysine mark. Arginine 145 serves as a coordination point for substrate. The active-site Proton acceptor; specific for L-alanine is the tyrosine 280. Methionine 328 contacts substrate.

The protein belongs to the alanine racemase family. The cofactor is pyridoxal 5'-phosphate.

It catalyses the reaction L-alanine = D-alanine. The protein operates within amino-acid biosynthesis; D-alanine biosynthesis; D-alanine from L-alanine: step 1/1. Functionally, catalyzes the interconversion of L-alanine and D-alanine. May also act on other amino acids. This chain is Alanine racemase (alr), found in Brucella ovis (strain ATCC 25840 / 63/290 / NCTC 10512).